A 164-amino-acid chain; its full sequence is Cytochrome c-type biogenesis protein CcmE (164 aa).

Over 1–8 the chain is Cytoplasmic; it reads MNPRRQKR. The helical; Signal-anchor for type II membrane protein transmembrane segment at 9–29 threads the bilayer; that stretch reads LIVISAIVLVIGAAIGLMLYA. Residues 30 to 164 lie on the Periplasmic side of the membrane; it reads LSQNIDLFYT…QAYSTPKVSG (135 aa). Heme contacts are provided by His132 and Tyr136.

It belongs to the CcmE/CycJ family.

It is found in the cell inner membrane. Functionally, heme chaperone required for the biogenesis of c-type cytochromes. Transiently binds heme delivered by CcmC and transfers the heme to apo-cytochromes in a process facilitated by CcmF and CcmH. The protein is Cytochrome c-type biogenesis protein CcmE of Pseudoalteromonas atlantica (strain T6c / ATCC BAA-1087).